The primary structure comprises 403 residues: N-isopropylammelide isopropyl amidohydrolase (403 aa).

Zn(2+) is bound by residues H60, H62, and H217. The active-site Proton donor/acceptor is H249. D303 is a binding site for Zn(2+).

This sequence belongs to the metallo-dependent hydrolases superfamily. N-acyl-D-amino-acid deacylase family. In terms of assembly, homotetramer. It depends on Zn(2+) as a cofactor.

The protein resides in the cytoplasm. It catalyses the reaction N-isopropylammelide + H2O + H(+) = isopropylamine + cyanurate. It functions in the pathway xenobiotic degradation; atrazine degradation; cyanurate from atrazine: step 3/3. Its activity is regulated as follows. Inhibited by N-ethylammeline, N-hydroxyethylammeline, N-isopropylammeline, ammeline and 2-amino-4hydroxy-1,3,5-s-triazine. Transforms N-isopropylammelide to cyanuric acid and isopropylamine. This Pseudomonas sp. (strain ADP) protein is N-isopropylammelide isopropyl amidohydrolase (atzC).